A 566-amino-acid chain; its full sequence is KsdD-like steroid dehydrogenase Rv0785 (566 aa).

23-54 contributes to the FAD binding site; sequence DAIVVGAGLAGLVAACELADRGLRVLILDQEN.

The protein belongs to the FAD-dependent oxidoreductase 2 family. The cofactor is FAD.

It functions in the pathway lipid metabolism; steroid biosynthesis. Its function is as follows. Able to catalyze the elimination of the C-1 and C-2 hydrogen atoms of the A-ring from the polycyclic ring structure of 3-ketosteroids. In Mycobacterium tuberculosis (strain ATCC 25618 / H37Rv), this protein is KsdD-like steroid dehydrogenase Rv0785.